The primary structure comprises 300 residues: Ribonuclease HIII (300 aa).

The RNase H type-2 domain occupies 83-300; that stretch reads IPIIGSDEVG…THKAQALLTK (218 aa). 3 residues coordinate a divalent metal cation: Asp89, Glu90, and Asp194.

This sequence belongs to the RNase HII family. RnhC subfamily. Mn(2+) serves as cofactor. It depends on Mg(2+) as a cofactor.

The protein resides in the cytoplasm. It catalyses the reaction Endonucleolytic cleavage to 5'-phosphomonoester.. Functionally, endonuclease that specifically degrades the RNA of RNA-DNA hybrids. This Streptococcus pyogenes serotype M5 (strain Manfredo) protein is Ribonuclease HIII.